A 260-amino-acid chain; its full sequence is Phosphatidate cytidylyltransferase (260 aa).

The next 7 membrane-spanning stretches (helical) occupy residues 9-29 (IIAL…LMLF), 46-66 (MIKF…IIML), 70-90 (AGEW…FIVL), 102-122 (FMDA…FMYF), 130-150 (LRYI…AYIF), 172-192 (FFGG…FVDL), and 196-216 (IWLL…GDLV).

The protein belongs to the CDS family.

The protein localises to the cell membrane. The catalysed reaction is a 1,2-diacyl-sn-glycero-3-phosphate + CTP + H(+) = a CDP-1,2-diacyl-sn-glycerol + diphosphate. It functions in the pathway phospholipid metabolism; CDP-diacylglycerol biosynthesis; CDP-diacylglycerol from sn-glycerol 3-phosphate: step 3/3. The polypeptide is Phosphatidate cytidylyltransferase (cdsA) (Staphylococcus epidermidis (strain ATCC 35984 / DSM 28319 / BCRC 17069 / CCUG 31568 / BM 3577 / RP62A)).